Here is a 629-residue protein sequence, read N- to C-terminus: tRNA uridine 5-carboxymethylaminomethyl modification enzyme MnmG (629 aa).

Residues 14 to 19 (GAGHAG), valine 126, and serine 181 each bind FAD. Position 273–287 (273–287 (GPRYCPSIEDKVVRF)) interacts with NAD(+). Glutamine 370 serves as a coordination point for FAD.

The protein belongs to the MnmG family. In terms of assembly, homodimer. Heterotetramer of two MnmE and two MnmG subunits. FAD serves as cofactor.

The protein localises to the cytoplasm. In terms of biological role, NAD-binding protein involved in the addition of a carboxymethylaminomethyl (cmnm) group at the wobble position (U34) of certain tRNAs, forming tRNA-cmnm(5)s(2)U34. The polypeptide is tRNA uridine 5-carboxymethylaminomethyl modification enzyme MnmG (Bacillus cereus (strain ATCC 14579 / DSM 31 / CCUG 7414 / JCM 2152 / NBRC 15305 / NCIMB 9373 / NCTC 2599 / NRRL B-3711)).